The following is a 185-amino-acid chain: Elongation factor P 1 (185 aa).

It belongs to the elongation factor P family.

It is found in the cytoplasm. Its pathway is protein biosynthesis; polypeptide chain elongation. Functionally, involved in peptide bond synthesis. Stimulates efficient translation and peptide-bond synthesis on native or reconstituted 70S ribosomes in vitro. Probably functions indirectly by altering the affinity of the ribosome for aminoacyl-tRNA, thus increasing their reactivity as acceptors for peptidyl transferase. The sequence is that of Elongation factor P 1 (efp1) from Chlamydia muridarum (strain MoPn / Nigg).